The primary structure comprises 262 residues: Nodulation protein J (262 aa).

An ABC transmembrane type-2 domain is found at 33-259 (ASILGNLADP…FLSTALLRRR (227 aa)). A run of 7 helical transmembrane segments spans residues 35-55 (ILGN…GLGM), 62-82 (GVSY…MTAS), 102-122 (AILH…AWAA), 127-147 (LAGT…WVSL), 148-168 (LYAL…AMIV), 177-197 (YFIF…GAVF), and 231-251 (LVHV…PFFL).

This sequence belongs to the ABC-2 integral membrane protein family. Lipooligosaccharide exporter (TC 3.A.1.102) subfamily. In terms of assembly, the complex is composed of two ATP-binding proteins (NodI) and two transmembrane proteins (NodJ).

Its subcellular location is the cell inner membrane. Its function is as follows. Part of the ABC transporter complex NodIJ involved in the export of the nodulation factors (Nod factors), the bacterial signal molecules that induce symbiosis and subsequent nodulation induction. Nod factors are LCO (lipo-chitin oligosaccharide), a modified beta-1,4-linked N-acetylglucosamine oligosaccharide. This subunit encodes the transporter. This is Nodulation protein J (nodJ) from Rhizobium meliloti (strain 1021) (Ensifer meliloti).